A 231-amino-acid polypeptide reads, in one-letter code: 7-cyano-7-deazaguanine synthase (231 aa).

Residue 8-18 (FSGGQDSTTCL) coordinates ATP. Cys188, Cys197, Cys200, and Cys203 together coordinate Zn(2+).

The protein belongs to the QueC family. Requires Zn(2+) as cofactor.

It carries out the reaction 7-carboxy-7-deazaguanine + NH4(+) + ATP = 7-cyano-7-deazaguanine + ADP + phosphate + H2O + H(+). It functions in the pathway purine metabolism; 7-cyano-7-deazaguanine biosynthesis. Its function is as follows. Catalyzes the ATP-dependent conversion of 7-carboxy-7-deazaguanine (CDG) to 7-cyano-7-deazaguanine (preQ(0)). This Escherichia coli O157:H7 protein is 7-cyano-7-deazaguanine synthase.